The primary structure comprises 269 residues: Sororin (269 aa).

Disordered stretches follow at residues Met-1 to Arg-39, Val-56 to Asn-110, and Ser-146 to Asn-169. The span at Asn-57–Val-66 shows a compositional bias: polar residues. A KEN box motif is present at residues Lys-85 to Asn-87. Low complexity predominate over residues Ser-146–Ser-155. An FGF motif motif is present at residues Phe-180–Phe-182. Residues Leu-247–Glu-269 form a C-terminal Sororin domain region.

This sequence belongs to the sororin family. In terms of assembly, interacts with the APC/C complex. Interacts with the chromatin-bound cohesin complex; the interaction is indirect, occurs after DNA replication and requires acetylation of the cohesin component smc3. Interacts (via the FGF motif) with pds5a and pds5b; the interaction is direct and prevents the interaction of pds5a with wapl. Post-translationally, ubiquitinated by the APC/C complex in G1, leading to its degradation.

Its subcellular location is the nucleus. The protein localises to the chromosome. The protein resides in the cytoplasm. Regulator of sister chromatid cohesion in mitosis stabilizing cohesin complex association with chromatin. May antagonize the action of wapl which stimulates cohesin dissociation from chromatin. Cohesion ensures that chromosome partitioning is accurate in both meiotic and mitotic cells and plays an important role in DNA repair. Required for efficient DNA double-stranded break repair. This chain is Sororin (cdca5-a), found in Xenopus laevis (African clawed frog).